The chain runs to 396 residues: Elongation factor Tu 2 (396 aa).

Residues 10 to 206 (KPHVNVGTIG…ALDTYIPTPK (197 aa)) enclose the tr-type G domain. Residues 19–26 (GHVDHGKT) form a G1 region. A GTP-binding site is contributed by 19–26 (GHVDHGKT). Mg(2+) is bound at residue Thr-26. Residues 60–64 (GITIS) form a G2 region. Residues 81 to 84 (DCPG) are G3. GTP-binding positions include 81 to 85 (DCPGH) and 136 to 139 (NKAD). Positions 136-139 (NKAD) are G4. A G5 region spans residues 174–176 (SAL).

Belongs to the TRAFAC class translation factor GTPase superfamily. Classic translation factor GTPase family. EF-Tu/EF-1A subfamily. In terms of assembly, monomer.

It localises to the cytoplasm. The enzyme catalyses GTP + H2O = GDP + phosphate + H(+). Functionally, GTP hydrolase that promotes the GTP-dependent binding of aminoacyl-tRNA to the A-site of ribosomes during protein biosynthesis. The polypeptide is Elongation factor Tu 2 (Ruthia magnifica subsp. Calyptogena magnifica).